The chain runs to 506 residues: H/ACA ribonucleoprotein complex subunit DKC1 (506 aa).

The disordered stretch occupies residues Met1 to Gln26. The active-site Nucleophile is the Asp120. The region spanning His291–Met366 is the PUA domain. Disordered stretches follow at residues Gly391 to Gly410 and Val419 to Asp506. Positions Lys421 to Ser434 are enriched in basic and acidic residues. The segment covering Glu457 to Lys466 has biased composition (basic residues).

This sequence belongs to the pseudouridine synthase TruB family. Part of the H/ACA small nucleolar ribonucleoprotein (H/ACA snoRNP) complex. The complex binds a box H/ACA small nucleolar RNA (snoRNA), which may target the specific site of modification within the RNA substrate.

Its subcellular location is the nucleus. It localises to the nucleolus. It is found in the cajal body. It carries out the reaction uridine in 5S rRNA = pseudouridine in 5S rRNA. In terms of biological role, catalytic subunit of H/ACA small nucleolar ribonucleoprotein (H/ACA snoRNP) complex, which catalyzes pseudouridylation of rRNA. This involves the isomerization of uridine such that the ribose is subsequently attached to C5, instead of the normal N1. Pseudouridine ('psi') residues may serve to stabilize the conformation of rRNAs. Required for ribosome biogenesis and telomere maintenance. The polypeptide is H/ACA ribonucleoprotein complex subunit DKC1 (Danio rerio (Zebrafish)).